The chain runs to 185 residues: MESTITIENVVASTRLAEDFDLEKMMESGLEGAEYNKVKFPGLVYRINNPKAAFLIFTSGKVVCTGSKSIGNAHAAIINLANTLKSICCEKIDLEPDVRVQNIVASADLKTNLNLNTIAIAFGLENVEYEPEVFPGLIYRVEAPKVVVLVFSSGKLVITGGKCPEDCEEGLRIVKTEFDNLGLLY.

Repeat copies occupy residues 7–84 and 100–178.

This sequence belongs to the TBP family.

In terms of biological role, general factor that plays a role in the activation of archaeal genes transcribed by RNA polymerase. Binds specifically to the TATA box promoter element which lies close to the position of transcription initiation. This is TATA-box-binding protein 3 from Methanosarcina mazei (strain ATCC BAA-159 / DSM 3647 / Goe1 / Go1 / JCM 11833 / OCM 88) (Methanosarcina frisia).